We begin with the raw amino-acid sequence, 1193 residues long: Probable cation-transporting ATPase 13A4 (1193 aa).

The Cytoplasmic portion of the chain corresponds to 1–32 (MGDHLEKSQHALLNEGDENEMEIFGYRTQGCR). An intramembrane segment occupies 33-53 (KALCLIGSIFSLGMLPLVFYW). Residues 54–198 (RPAWRVWANC…DVEITPIWKL (145 aa)) are Cytoplasmic-facing. A helical transmembrane segment spans residues 199–219 (LIKEVLNPFYIFQLFSVCLWF). Topologically, residues 220-224 (SEDYK) are lumenal. A helical transmembrane segment spans residues 225 to 245 (EYALAIILMSVISIALTVYDL). The Cytoplasmic portion of the chain corresponds to 246-401 (RQQSVKLHHL…NFKLYRDAIR (156 aa)). The chain crosses the membrane as a helical span at residues 402–422 (FLLCLVGTATIGMVYTLCVYV). The Lumenal portion of the chain corresponds to 423-437 (LSGEPPEEVVRKALD). The helical transmembrane segment at 438-458 (VITIAVPPALPAALTTGIIYA) threads the bilayer. Residues 459–901 (QRRLKKKGIF…KEGRAALVTS (443 aa)) lie on the Cytoplasmic side of the membrane. Asp-487 serves as the catalytic 4-aspartylphosphate intermediate. Residues Asp-849 and Asp-853 each contribute to the Mg(2+) site. A helical transmembrane segment spans residues 902–922 (FCMFKYMALYSMIQYVGVLLL). Residues 923–933 (YWKTNSLSNYQ) lie on the Lumenal side of the membrane. Residues 934–954 (FLFQDLAITTLIGVTMNLNGA) traverse the membrane as a helical segment. Residues 955-973 (NPKLVPFRPAGRLISPPLL) are Cytoplasmic-facing. The chain crosses the membrane as a helical span at residues 974–994 (LSVVLNILLSLAMHIVGFILV). At 995-1036 (QKQPWYIMDYHSVCPVRNESASALAASPSVPEKTRSNSTFAS) the chain is on the lumenal side. A helical membrane pass occupies residues 1037 to 1057 (FENTTIWFLGTINCIFVALVF). The Cytoplasmic portion of the chain corresponds to 1058–1071 (SKGKPFRQPTYTNY). The helical transmembrane segment at 1072–1092 (IFVLVLILQMGVCLFILFADI) threads the bilayer. At 1093 to 1105 (PEMHRRLDLLCTP) the chain is on the lumenal side. The chain crosses the membrane as a helical span at residues 1106-1126 (VLWRVYILIMISSNFVVSLAV). Over 1127 to 1193 (EKAIIENRAL…PVFESNEEQL (67 aa)) the chain is Cytoplasmic.

Belongs to the cation transport ATPase (P-type) (TC 3.A.3) family. Type V subfamily. In terms of tissue distribution, expressed in brain and stomach.

The protein localises to the early endosome membrane. It is found in the late endosome membrane. It localises to the recycling endosome membrane. It carries out the reaction ATP + H2O = ADP + phosphate + H(+). This Mus musculus (Mouse) protein is Probable cation-transporting ATPase 13A4 (Atp13a4).